Reading from the N-terminus, the 747-residue chain is Homeobox-leucine zipper protein GLABRA 2 (747 aa).

The segment at 31–112 (RNASSGSTNP…KKYHRHTTDQ (82 aa)) is disordered. Polar residues predominate over residues 58 to 68 (EMSSENSGPTR). The segment covering 73–90 (EDLEGEDHDDEEEEEEDG) has biased composition (acidic residues). Basic residues predominate over residues 97 to 107 (TNKRKRKKYHR). Positions 101–160 (KRKKYHRHTTDQIRHMEALFKETPHPDEKQRQQLSKQLGLAPRQVKFWFQNRRTQIKAIQ) form a DNA-binding region, homeobox. Positions 155-223 (QIKAIQERHE…LDKLRAALGR (69 aa)) form a coiled coil. An START domain is found at 250–489 (FALEKSRIAE…LQLHCERLVF (240 aa)).

Belongs to the HD-ZIP homeobox family. Class IV subfamily. Interacts with GIR1 and GIR2. Expressed in individual developing trichome cells of the emerging leaf primordia. Expressed in differentiating hairless cells of root epidermis.

Its subcellular location is the nucleus. Its function is as follows. Transcription factor involved in the determination of epidermal cell identity. Required for correct morphological development and maturation of trichomes. Regulates the frequency of trichome initiation and determines trichome spacing. Acts as a negative factor for root hair development. Required for ectopic repression of root hair development in a subset of epidermal cells. May suppress hair formation in root epidermis by promoting differentiation into hairless epidermal cells. Directly suppresses the bHLH transcription factor genes, RHD6, RSL1, RSL2, LRL1, and LRL2, which have diverse functions in root hair development. Required for normal development of seed coat mucilage. Involved in the control of seed oil accumulation. Acts as a negative regulator of anthocyanin biosynthesis. May directly repress the expression of some component genes from the MYB-bHLH-WD40 (MBW) transcriptional activator complex. The MBW complex activates the transcription of late biosynthesis genes in the flavonoid pathway, leading to the production of anthocyanins. This chain is Homeobox-leucine zipper protein GLABRA 2, found in Arabidopsis thaliana (Mouse-ear cress).